Consider the following 638-residue polypeptide: ATP-dependent zinc metalloprotease FtsH (638 aa).

Topologically, residues Met-1–Thr-7 are cytoplasmic. The helical transmembrane segment at Ile-8–Gly-28 threads the bilayer. The Periplasmic segment spans residues Asn-29 to Leu-102. A helical membrane pass occupies residues Trp-103 to Phe-123. Residues Met-124 to Ala-638 lie on the Cytoplasmic side of the membrane. Gly-195 to Thr-202 is a binding site for ATP. His-417 provides a ligand contact to Zn(2+). The active site involves Glu-418. Zn(2+) contacts are provided by His-421 and Asp-493. A disordered region spans residues Gly-596–Ala-638. Positions Ala-614–Asp-625 are enriched in basic and acidic residues.

It in the central section; belongs to the AAA ATPase family. In the C-terminal section; belongs to the peptidase M41 family. Homohexamer. It depends on Zn(2+) as a cofactor.

It localises to the cell inner membrane. Its function is as follows. Acts as a processive, ATP-dependent zinc metallopeptidase for both cytoplasmic and membrane proteins. Plays a role in the quality control of integral membrane proteins. The polypeptide is ATP-dependent zinc metalloprotease FtsH (Myxococcus xanthus (strain DK1622)).